The following is a 171-amino-acid chain: UPF0398 protein spyM18_1659 (171 aa).

The protein belongs to the UPF0398 family.

The chain is UPF0398 protein spyM18_1659 from Streptococcus pyogenes serotype M18 (strain MGAS8232).